Consider the following 130-residue polypeptide: uncharacterized protein (130 aa).

An N-acetylmethionine modification is found at Met1.

As to quaternary structure, homotetramer.

This is an uncharacterized protein from Arabidopsis thaliana (Mouse-ear cress).